The sequence spans 433 residues: tRNA-2-methylthio-N(6)-dimethylallyladenosine synthase (433 aa).

An MTTase N-terminal domain is found at 3-118 (KRLYIETLGC…IRDVIKQEKA (116 aa)). Residues Cys-12, Cys-49, Cys-81, Cys-150, Cys-154, and Cys-157 each coordinate [4Fe-4S] cluster. The Radical SAM core domain maps to 136–371 (RTSPYKAFIN…LHLQMLDSIS (236 aa)). Positions 372–433 (EQEKDKVYEV…RLSLEGELVG (62 aa)) constitute a TRAM domain.

This sequence belongs to the methylthiotransferase family. MiaB subfamily. Monomer. It depends on [4Fe-4S] cluster as a cofactor.

The protein localises to the cytoplasm. The enzyme catalyses N(6)-dimethylallyladenosine(37) in tRNA + (sulfur carrier)-SH + AH2 + 2 S-adenosyl-L-methionine = 2-methylsulfanyl-N(6)-dimethylallyladenosine(37) in tRNA + (sulfur carrier)-H + 5'-deoxyadenosine + L-methionine + A + S-adenosyl-L-homocysteine + 2 H(+). Catalyzes the methylthiolation of N6-(dimethylallyl)adenosine (i(6)A), leading to the formation of 2-methylthio-N6-(dimethylallyl)adenosine (ms(2)i(6)A) at position 37 in tRNAs that read codons beginning with uridine. The polypeptide is tRNA-2-methylthio-N(6)-dimethylallyladenosine synthase (Nitratiruptor sp. (strain SB155-2)).